The primary structure comprises 565 residues: 2-isopropylmalate synthase (565 aa).

A Pyruvate carboxyltransferase domain is found at 37 to 312; it reads PRWCSVDLRD…DPMIDLSDID (276 aa). The Mg(2+) site is built by aspartate 46, histidine 251, histidine 253, and asparagine 287. Positions 446-565 are regulatory domain; sequence EGGDPAASLE…SAVNRASRES (120 aa).

Belongs to the alpha-IPM synthase/homocitrate synthase family. LeuA type 2 subfamily. In terms of assembly, homodimer. Mg(2+) serves as cofactor.

The protein localises to the cytoplasm. It catalyses the reaction 3-methyl-2-oxobutanoate + acetyl-CoA + H2O = (2S)-2-isopropylmalate + CoA + H(+). The protein operates within amino-acid biosynthesis; L-leucine biosynthesis; L-leucine from 3-methyl-2-oxobutanoate: step 1/4. Its function is as follows. Catalyzes the condensation of the acetyl group of acetyl-CoA with 3-methyl-2-oxobutanoate (2-ketoisovalerate) to form 3-carboxy-3-hydroxy-4-methylpentanoate (2-isopropylmalate). The protein is 2-isopropylmalate synthase of Parafrankia sp. (strain EAN1pec).